We begin with the raw amino-acid sequence, 184 residues long: Peptide deformylase 2 (184 aa).

Residues Cys-110 and His-153 each contribute to the Fe cation site. Glu-154 is a catalytic residue. A Fe cation-binding site is contributed by His-157.

This sequence belongs to the polypeptide deformylase family. Fe(2+) is required as a cofactor.

The enzyme catalyses N-terminal N-formyl-L-methionyl-[peptide] + H2O = N-terminal L-methionyl-[peptide] + formate. In terms of biological role, removes the formyl group from the N-terminal Met of newly synthesized proteins. Requires at least a dipeptide for an efficient rate of reaction. N-terminal L-methionine is a prerequisite for activity but the enzyme has broad specificity at other positions. This is Peptide deformylase 2 from Bacillus anthracis.